Consider the following 226-residue polypeptide: NADH-ubiquinone oxidoreductase chain 6 (226 aa).

Helical transmembrane passes span 1–21 (MNNF…ILVI), 27–47 (VISV…LVLL), 52–72 (IGIS…LFVI), 94–114 (PLAT…VPSF), 126–146 (IFKF…LGVG), and 185–205 (ALWL…PITL).

Belongs to the complex I subunit 6 family.

Its subcellular location is the mitochondrion inner membrane. It catalyses the reaction a ubiquinone + NADH + 5 H(+)(in) = a ubiquinol + NAD(+) + 4 H(+)(out). In terms of biological role, core subunit of the mitochondrial membrane respiratory chain NADH dehydrogenase (Complex I) that is believed to belong to the minimal assembly required for catalysis. Complex I functions in the transfer of electrons from NADH to the respiratory chain. The immediate electron acceptor for the enzyme is believed to be ubiquinone. The protein is NADH-ubiquinone oxidoreductase chain 6 (ND6) of Mycosarcoma maydis (Corn smut fungus).